The sequence spans 365 residues: Dual-specificity RNA methyltransferase RlmN (365 aa).

Glu91 serves as the catalytic Proton acceptor. A Radical SAM core domain is found at 97–337; the sequence is ETSRGTLCIS…TTVRKTRGDD (241 aa). Cys104 and Cys342 are oxidised to a cystine. The [4Fe-4S] cluster site is built by Cys111, Cys115, and Cys118. S-adenosyl-L-methionine-binding positions include 168–169, Ser200, 222–224, and Asn299; these read GE and SLH. Cys342 serves as the catalytic S-methylcysteine intermediate.

It belongs to the radical SAM superfamily. RlmN family. [4Fe-4S] cluster is required as a cofactor.

The protein resides in the cytoplasm. The catalysed reaction is adenosine(2503) in 23S rRNA + 2 reduced [2Fe-2S]-[ferredoxin] + 2 S-adenosyl-L-methionine = 2-methyladenosine(2503) in 23S rRNA + 5'-deoxyadenosine + L-methionine + 2 oxidized [2Fe-2S]-[ferredoxin] + S-adenosyl-L-homocysteine. It carries out the reaction adenosine(37) in tRNA + 2 reduced [2Fe-2S]-[ferredoxin] + 2 S-adenosyl-L-methionine = 2-methyladenosine(37) in tRNA + 5'-deoxyadenosine + L-methionine + 2 oxidized [2Fe-2S]-[ferredoxin] + S-adenosyl-L-homocysteine. In terms of biological role, specifically methylates position 2 of adenine 2503 in 23S rRNA and position 2 of adenine 37 in tRNAs. m2A2503 modification seems to play a crucial role in the proofreading step occurring at the peptidyl transferase center and thus would serve to optimize ribosomal fidelity. This chain is Dual-specificity RNA methyltransferase RlmN, found in Nitrosospira multiformis (strain ATCC 25196 / NCIMB 11849 / C 71).